Here is a 454-residue protein sequence, read N- to C-terminus: UPF0210 protein Memar_2269 (454 aa).

Belongs to the UPF0210 family.

This Methanoculleus marisnigri (strain ATCC 35101 / DSM 1498 / JR1) protein is UPF0210 protein Memar_2269.